Here is a 473-residue protein sequence, read N- to C-terminus: Sulfate adenylyltransferase subunit 1 (473 aa).

The region spanning 19 to 238 (KTLLKFLTCG…IKIKNSISSE (220 aa)) is the tr-type G domain. Residues 28–35 (GSVDDGKS) are G1. 28-35 (GSVDDGKS) contributes to the GTP binding site. The segment at 86–90 (GITID) is G2. The segment at 107-110 (DTPG) is G3. GTP contacts are provided by residues 107 to 111 (DTPGH) and 162 to 165 (NKMD). Residues 162-165 (NKMD) are G4. The segment at 200–202 (SAL) is G5.

The protein belongs to the TRAFAC class translation factor GTPase superfamily. Classic translation factor GTPase family. CysN/NodQ subfamily. Heterodimer composed of CysD, the smaller subunit, and CysN.

It carries out the reaction sulfate + ATP + H(+) = adenosine 5'-phosphosulfate + diphosphate. The protein operates within sulfur metabolism; hydrogen sulfide biosynthesis; sulfite from sulfate: step 1/3. In terms of biological role, with CysD forms the ATP sulfurylase (ATPS) that catalyzes the adenylation of sulfate producing adenosine 5'-phosphosulfate (APS) and diphosphate, the first enzymatic step in sulfur assimilation pathway. APS synthesis involves the formation of a high-energy phosphoric-sulfuric acid anhydride bond driven by GTP hydrolysis by CysN coupled to ATP hydrolysis by CysD. This Buchnera aphidicola subsp. Acyrthosiphon pisum (strain APS) (Acyrthosiphon pisum symbiotic bacterium) protein is Sulfate adenylyltransferase subunit 1.